Here is a 128-residue protein sequence, read N- to C-terminus: Ferric uptake regulation protein homolog (128 aa).

Belongs to the Fur family.

The sequence is that of Ferric uptake regulation protein homolog from Archaeoglobus fulgidus (strain ATCC 49558 / DSM 4304 / JCM 9628 / NBRC 100126 / VC-16).